The sequence spans 1101 residues: Carbamoyl phosphate synthase large chain (1101 aa).

The carboxyphosphate synthetic domain stretch occupies residues 1–402 (MPKRTDLKSV…ALQKALRSLE (402 aa)). ATP-binding residues include Arg129, Arg169, Gly175, Gly176, Glu208, Ile210, Glu215, Gly241, Val242, His243, Gln285, and Glu299. The ATP-grasp 1 domain maps to 133 to 328 (KGVVERAGGE…IAKIATKLAL (196 aa)). The Mg(2+) site is built by Gln285, Glu299, and Asn301. 3 residues coordinate Mn(2+): Gln285, Glu299, and Asn301. Residues 403-544 (QKGSELAFPQ…YRYSSYDLET (142 aa)) form an oligomerization domain region. Positions 545-947 (EVAPHEGESV…AFAKSQSAAG (403 aa)) are carbamoyl phosphate synthetic domain. In terms of domain architecture, ATP-grasp 2 spans 675 to 866 (ALVLERAGLV…LAKAAARIGV (192 aa)). Residues Arg711, Arg750, Leu752, Glu757, Gly782, Ile783, His784, Ser785, Gln825, and Glu837 each coordinate ATP. The Mg(2+) site is built by Gln825, Glu837, and Asn839. Residues Gln825, Glu837, and Asn839 each contribute to the Mn(2+) site. The MGS-like domain maps to 948–1093 (GPLPTSGRVF…QEHDARLQQA (146 aa)). Residues 948-1101 (GPLPTSGRVF…QAVAGPEAAA (154 aa)) form an allosteric domain region.

It belongs to the CarB family. Composed of two chains; the small (or glutamine) chain promotes the hydrolysis of glutamine to ammonia, which is used by the large (or ammonia) chain to synthesize carbamoyl phosphate. Tetramer of heterodimers (alpha,beta)4. The cofactor is Mg(2+). Mn(2+) serves as cofactor.

The enzyme catalyses hydrogencarbonate + L-glutamine + 2 ATP + H2O = carbamoyl phosphate + L-glutamate + 2 ADP + phosphate + 2 H(+). The catalysed reaction is hydrogencarbonate + NH4(+) + 2 ATP = carbamoyl phosphate + 2 ADP + phosphate + 2 H(+). Its pathway is amino-acid biosynthesis; L-arginine biosynthesis; carbamoyl phosphate from bicarbonate: step 1/1. It participates in pyrimidine metabolism; UMP biosynthesis via de novo pathway; (S)-dihydroorotate from bicarbonate: step 1/3. Its function is as follows. Large subunit of the glutamine-dependent carbamoyl phosphate synthetase (CPSase). CPSase catalyzes the formation of carbamoyl phosphate from the ammonia moiety of glutamine, carbonate, and phosphate donated by ATP, constituting the first step of 2 biosynthetic pathways, one leading to arginine and/or urea and the other to pyrimidine nucleotides. The large subunit (synthetase) binds the substrates ammonia (free or transferred from glutamine from the small subunit), hydrogencarbonate and ATP and carries out an ATP-coupled ligase reaction, activating hydrogencarbonate by forming carboxy phosphate which reacts with ammonia to form carbamoyl phosphate. In Micrococcus luteus (strain ATCC 4698 / DSM 20030 / JCM 1464 / CCM 169 / CCUG 5858 / IAM 1056 / NBRC 3333 / NCIMB 9278 / NCTC 2665 / VKM Ac-2230) (Micrococcus lysodeikticus), this protein is Carbamoyl phosphate synthase large chain.